We begin with the raw amino-acid sequence, 272 residues long: Indole-3-glycerol phosphate synthase (272 aa).

Belongs to the TrpC family.

The enzyme catalyses 1-(2-carboxyphenylamino)-1-deoxy-D-ribulose 5-phosphate + H(+) = (1S,2R)-1-C-(indol-3-yl)glycerol 3-phosphate + CO2 + H2O. The protein operates within amino-acid biosynthesis; L-tryptophan biosynthesis; L-tryptophan from chorismate: step 4/5. The chain is Indole-3-glycerol phosphate synthase from Mycobacterium tuberculosis (strain ATCC 25177 / H37Ra).